A 252-amino-acid polypeptide reads, in one-letter code: Acyltransferase PGAP2 (252 aa).

The Cytoplasmic portion of the chain corresponds to 1–22 (MVPVGPERGANSLFSLRFTTFA). The helical transmembrane segment at 23 to 43 (VGTVSLPLFAFLFCIVWSLLF) threads the bilayer. The Lumenal segment spans residues 44–77 (NFSETTATHCHVPNYLPSVSAAIGGETPQRYIWR). Residues 78–98 (LCIGLHSAPRFLVGVAYLHYY) form a helical membrane-spanning segment. The Cytoplasmic portion of the chain corresponds to 99-111 (QGTPCSSPAYPRL). The chain crosses the membrane as a helical span at residues 112-132 (CHLNFLLNCCEIFFLILLTYV). Topologically, residues 133–142 (SSSENYEVHK) are lumenal. Residues 143–163 (LGFMAFMLFSVGYMFVTCSLW) form a helical membrane-spanning segment. The Cytoplasmic portion of the chain corresponds to 164 to 184 (RVARKGSGSLEERTSYAWKKR). Residues 185-205 (LFGFYLLMFLSSILVYIWHNM) form a helical membrane-spanning segment. Over 206 to 208 (YCE) the chain is Lumenal. A helical transmembrane segment spans residues 209-229 (AGVYTVFALLEYLVVLSNMGF). Residues 230 to 252 (HMTAWWDFGNKELMICSPGDKRI) lie on the Cytoplasmic side of the membrane.

It belongs to the PGAP2 family.

The protein resides in the golgi apparatus membrane. Functionally, involved in the fatty acid remodeling steps of GPI-anchor maturation where the unsaturated acyl chain at sn-2 of inositol phosphate is replaced by a saturated stearoyl chain. May catalyze the second step of the fatty acid remodeling, by reacylating a lyso-GPI intermediate at sn-2 of inositol phosphate by a saturated chain. The fatty acid remodeling steps is critical for the integration of GPI-APs into lipid rafts. The protein is Acyltransferase PGAP2 of Xenopus tropicalis (Western clawed frog).